The following is a 206-amino-acid chain: Guanylate kinase (206 aa).

Residues 7 to 185 (GIVLVLCAPS…AYDELRAAYL (179 aa)) enclose the Guanylate kinase-like domain. 14–21 (APSGTGKT) serves as a coordination point for ATP.

Belongs to the guanylate kinase family.

It is found in the cytoplasm. The enzyme catalyses GMP + ATP = GDP + ADP. Functionally, essential for recycling GMP and indirectly, cGMP. The protein is Guanylate kinase of Oleidesulfovibrio alaskensis (strain ATCC BAA-1058 / DSM 17464 / G20) (Desulfovibrio alaskensis).